The sequence spans 311 residues: Methionyl-tRNA formyltransferase (311 aa).

112 to 115 (SLLP) provides a ligand contact to (6S)-5,6,7,8-tetrahydrofolate.

It belongs to the Fmt family.

It catalyses the reaction L-methionyl-tRNA(fMet) + (6R)-10-formyltetrahydrofolate = N-formyl-L-methionyl-tRNA(fMet) + (6S)-5,6,7,8-tetrahydrofolate + H(+). Functionally, attaches a formyl group to the free amino group of methionyl-tRNA(fMet). The formyl group appears to play a dual role in the initiator identity of N-formylmethionyl-tRNA by promoting its recognition by IF2 and preventing the misappropriation of this tRNA by the elongation apparatus. The polypeptide is Methionyl-tRNA formyltransferase (Bartonella henselae (strain ATCC 49882 / DSM 28221 / CCUG 30454 / Houston 1) (Rochalimaea henselae)).